The primary structure comprises 221 residues: Large ribosomal subunit protein uL3 (221 aa).

It belongs to the universal ribosomal protein uL3 family. In terms of assembly, part of the 50S ribosomal subunit. Forms a cluster with proteins L14 and L19.

Its function is as follows. One of the primary rRNA binding proteins, it binds directly near the 3'-end of the 23S rRNA, where it nucleates assembly of the 50S subunit. This is Large ribosomal subunit protein uL3 from Chlamydia trachomatis serovar A (strain ATCC VR-571B / DSM 19440 / HAR-13).